The sequence spans 607 residues: Pyruvate decarboxylase 2 (607 aa).

The segment at 1–22 is disordered; it reads MDTKIGSIDACNPTNHDIGGPP. Residues Asp69 and His156 each contribute to the substrate site. The tract at residues 434–516 is thiamine pyrophosphate binding; sequence DSWFNCQKLK…FLINNGGYTI (83 aa). 3 residues coordinate Mg(2+): Asp484, Asn511, and Gly513. Position 517 (Glu517) interacts with substrate.

This sequence belongs to the TPP enzyme family. As to quaternary structure, homotetramer. A metal cation serves as cofactor. Thiamine diphosphate is required as a cofactor. In terms of tissue distribution, expressed at low levels in roots, shoots, flowers, siliques and seeds.

It carries out the reaction a 2-oxocarboxylate + H(+) = an aldehyde + CO2. This is Pyruvate decarboxylase 2 (PDC2) from Arabidopsis thaliana (Mouse-ear cress).